The primary structure comprises 235 residues: Orotidine 5'-phosphate decarboxylase (235 aa).

Substrate is bound by residues Asp17, Lys39, 66–75 (DLKLHDIGNT), Thr121, Arg182, Gln191, Gly211, and Arg212. Lys68 acts as the Proton donor in catalysis.

It belongs to the OMP decarboxylase family. Type 1 subfamily. As to quaternary structure, homodimer.

The enzyme catalyses orotidine 5'-phosphate + H(+) = UMP + CO2. It functions in the pathway pyrimidine metabolism; UMP biosynthesis via de novo pathway; UMP from orotate: step 2/2. Its function is as follows. Catalyzes the decarboxylation of orotidine 5'-monophosphate (OMP) to uridine 5'-monophosphate (UMP). The polypeptide is Orotidine 5'-phosphate decarboxylase (Rhodopseudomonas palustris (strain BisB5)).